A 345-amino-acid polypeptide reads, in one-letter code: Adenine deaminase (345 aa).

Zn(2+) contacts are provided by H20, H22, and H204. E207 (proton donor) is an active-site residue. D285 is a Zn(2+) binding site. D286 contributes to the substrate binding site.

The protein belongs to the metallo-dependent hydrolases superfamily. Adenosine and AMP deaminases family. Adenine deaminase type 2 subfamily. Zn(2+) is required as a cofactor.

The catalysed reaction is adenine + H2O + H(+) = hypoxanthine + NH4(+). Its function is as follows. Catalyzes the hydrolytic deamination of adenine to hypoxanthine. Plays an important role in the purine salvage pathway and in nitrogen catabolism. This Ralstonia nicotianae (strain ATCC BAA-1114 / GMI1000) (Ralstonia solanacearum) protein is Adenine deaminase.